The sequence spans 183 residues: tRNA-splicing endonuclease (183 aa).

Active-site residues include tyrosine 120, histidine 128, and lysine 159.

The protein belongs to the tRNA-intron endonuclease family. Archaeal short subfamily. Homotetramer; although the tetramer contains four active sites, only two participate in the cleavage. Therefore, it should be considered as a dimer of dimers.

The enzyme catalyses pretRNA = a 3'-half-tRNA molecule with a 5'-OH end + a 5'-half-tRNA molecule with a 2',3'-cyclic phosphate end + an intron with a 2',3'-cyclic phosphate and a 5'-hydroxyl terminus.. Endonuclease that removes tRNA introns. Cleaves pre-tRNA at the 5'- and 3'-splice sites to release the intron. The products are an intron and two tRNA half-molecules bearing 2',3' cyclic phosphate and 5'-OH termini. Recognizes a pseudosymmetric substrate in which 2 bulged loops of 3 bases are separated by a stem of 4 bp. The polypeptide is tRNA-splicing endonuclease (Pyrobaculum islandicum (strain DSM 4184 / JCM 9189 / GEO3)).